Reading from the N-terminus, the 196-residue chain is MPIVPKHFFERPTLELAEKLLGKIFVRRISDTIRLKGRIVETEAYCGEFDEASHAWRGKTTRNSMMFNSPGMLYVYLAYGSHYMLNIVSEPENIPGAVLIRAMEPIDGLMFMKEQRGTALATSLLSGPGKLTQAFAIRGDCNGKDLFNNEFFLENAQDIPQNAMGSGSRVGITKSRQLQWRKYILNNPHVSKARGS.

The protein belongs to the DNA glycosylase MPG family.

This Chlorobium phaeobacteroides (strain DSM 266 / SMG 266 / 2430) protein is Putative 3-methyladenine DNA glycosylase.